A 562-amino-acid chain; its full sequence is uncharacterized protein (562 aa).

5 consecutive transmembrane segments (helical) span residues Val4–Leu26, Gly33–Phe55, Ala59–Gly78, Leu90–Phe112, and Ile159–Ala181. RCK C-terminal domains lie at Pro207–Thr287 and Leu295–Gln375. 6 consecutive transmembrane segments (helical) span residues Ile385–Ser402, Gly406–Leu428, Leu449–Gln471, Leu476–His498, Val505–Ala524, and Val539–Val561.

Belongs to the AAE transporter (TC 2.A.81) family.

The protein localises to the cell membrane. This is an uncharacterized protein from Bradyrhizobium diazoefficiens (strain JCM 10833 / BCRC 13528 / IAM 13628 / NBRC 14792 / USDA 110).